The following is a 258-amino-acid chain: Imidazole glycerol phosphate synthase subunit HisF (258 aa).

Residues D11 and D130 contribute to the active site.

This sequence belongs to the HisA/HisF family. Heterodimer of HisH and HisF.

The protein localises to the cytoplasm. The catalysed reaction is 5-[(5-phospho-1-deoxy-D-ribulos-1-ylimino)methylamino]-1-(5-phospho-beta-D-ribosyl)imidazole-4-carboxamide + L-glutamine = D-erythro-1-(imidazol-4-yl)glycerol 3-phosphate + 5-amino-1-(5-phospho-beta-D-ribosyl)imidazole-4-carboxamide + L-glutamate + H(+). Its pathway is amino-acid biosynthesis; L-histidine biosynthesis; L-histidine from 5-phospho-alpha-D-ribose 1-diphosphate: step 5/9. In terms of biological role, IGPS catalyzes the conversion of PRFAR and glutamine to IGP, AICAR and glutamate. The HisF subunit catalyzes the cyclization activity that produces IGP and AICAR from PRFAR using the ammonia provided by the HisH subunit. This Citrobacter koseri (strain ATCC BAA-895 / CDC 4225-83 / SGSC4696) protein is Imidazole glycerol phosphate synthase subunit HisF.